The sequence spans 104 residues: MSNGPLAPGYDSDILVEDDVRLPRMYRVLLHNDDYTTMEFVVSILVEVFRKTAEQATAIMLAVHRDGVGECGVYTFEVAETKAAIVHARARREGYPLRCSTEEV.

This sequence belongs to the ClpS family. As to quaternary structure, binds to the N-terminal domain of the chaperone ClpA.

In terms of biological role, involved in the modulation of the specificity of the ClpAP-mediated ATP-dependent protein degradation. The sequence is that of ATP-dependent Clp protease adapter protein ClpS from Nitratidesulfovibrio vulgaris (strain ATCC 29579 / DSM 644 / CCUG 34227 / NCIMB 8303 / VKM B-1760 / Hildenborough) (Desulfovibrio vulgaris).